Reading from the N-terminus, the 245-residue chain is DNA repair protein RecO (245 aa).

Belongs to the RecO family.

Its function is as follows. Involved in DNA repair and RecF pathway recombination. This chain is DNA repair protein RecO, found in Porphyromonas gingivalis (strain ATCC BAA-308 / W83).